A 1066-amino-acid polypeptide reads, in one-letter code: Ribosomal protein S6 kinase delta-1 (1066 aa).

A PX domain is found at 8–132; that stretch reads SADLARFYTV…DFFKGGIIND (125 aa). Residues 207–228 are disordered; that stretch reads VASDSEQSKTEEERESRSLFPG. Over residues 212–223 the composition is skewed to basic and acidic residues; it reads EQSKTEEERESR. Positions 277 to 305 constitute an MIT domain; it reads VQGESSPTRREAVKRRTAEYLMRAESISS. 5 positions are modified to phosphoserine: Ser282, Ser423, Ser427, Ser449, and Ser455. A Protein kinase 1 domain is found at 344–445; it reads GVIDKVLLVM…PTLAKVHLQQ (102 aa). The tract at residues 441–509 is disordered; sequence VHLQQPTSSP…SGSSSEEECT (69 aa). The span at 448-458 shows a compositional bias: low complexity; sequence SSPQDSSSFES. Residues 474–483 show a composition bias toward polar residues; it reads SSLTPSSQDD. The segment covering 492 to 503 has biased composition (low complexity); the sequence is DSSPKWPDSGSS. Ser494, Ser528, Ser583, Ser605, Ser608, Ser640, Ser661, Ser664, Ser667, and Ser794 each carry phosphoserine. The tract at residues 553–596 is disordered; that stretch reads HLAADSDSPSTQLRAHELKFFPNDDPEAVSSPRTSDSLSRSKNS. The segment covering 582-593 has biased composition (low complexity); that stretch reads SSPRTSDSLSRS. The 263-residue stretch at 794–1056 folds into the Protein kinase 2 domain; it reads SSDPKFQGLG…VEDIKSHPFF (263 aa). Residues 801 to 809 and Arg820 each bind ATP; that span reads GLGVVESAV. Ser872 bears the Phosphoserine mark. Asp929 functions as the Proton acceptor in the catalytic mechanism.

The protein belongs to the protein kinase superfamily. Ser/Thr protein kinase family. S6 kinase subfamily. As to quaternary structure, interacts with SPHK1 and phosphatidylinositol 3-phosphate. Interacts (via PX domain) with PRDX3. Highly expressed in testis, skeletal muscle, brain, heart, placenta, kidney and liver and weakly expressed in thymus, small intestine, lung and colon.

It localises to the cytoplasm. It is found in the membrane. The protein resides in the early endosome. It catalyses the reaction L-seryl-[protein] + ATP = O-phospho-L-seryl-[protein] + ADP + H(+). The enzyme catalyses L-threonyl-[protein] + ATP = O-phospho-L-threonyl-[protein] + ADP + H(+). In terms of biological role, may be involved in transmitting sphingosine-1 phosphate (SPP)-mediated signaling into the cell. Plays a role in the recruitment of PRDX3 to early endosomes. The sequence is that of Ribosomal protein S6 kinase delta-1 (RPS6KC1) from Homo sapiens (Human).